Reading from the N-terminus, the 502-residue chain is Mitochondrial fusion and transport protein UGO1 (502 aa).

Residue M1 is modified to N-acetylmethionine. The Cytoplasmic segment spans residues M1–S293. The interval M1 to F294 is binds FZO1. Residues P288–L383 form a Solcar repeat. The chain crosses the membrane as a helical; Signal-anchor for type II membrane protein span at residues F294 to I314. Residues D312–F502 form a binds MGM1 region. The Mitochondrial intermembrane portion of the chain corresponds to R315–F502.

Interacts with FZO1 through its cytoplasmic domain and with MGM1 through its mitochondrial intermembrane space domain.

Its subcellular location is the mitochondrion outer membrane. Its function is as follows. Required for mitochondrial fusion as well as normal mitochondrial morphology by bridging the essential interaction between FZO1 and MGM1. May coordinate fusion of inner and outer membranes during mitochondrial fusion. This is Mitochondrial fusion and transport protein UGO1 from Saccharomyces cerevisiae (strain ATCC 204508 / S288c) (Baker's yeast).